The primary structure comprises 769 residues: Integrin beta-2 (769 aa).

Residues 1–22 form the signal peptide; it reads MLRQRPQLLLLAGLLALQSVLS. Glutamine 23 bears the Pyrrolidone carboxylic acid mark. Residues 23–700 lie on the Extracellular side of the membrane; it reads QECTNYKVST…DMLECVKGPN (678 aa). One can recognise a PSI domain in the interval 24-74; that stretch reads ECTNYKVSTCRDCIESGPGCAWCQKLNFTGQGEPDSIRCDTRAELLSKGCP. Intrachain disulfides connect cysteine 25–cysteine 43, cysteine 33–cysteine 447, cysteine 36–cysteine 62, cysteine 46–cysteine 73, cysteine 191–cysteine 198, cysteine 246–cysteine 286, cysteine 386–cysteine 400, cysteine 420–cysteine 445, cysteine 449–cysteine 467, cysteine 459–cysteine 470, cysteine 472–cysteine 481, cysteine 483–cysteine 514, cysteine 497–cysteine 512, cysteine 506–cysteine 517, cysteine 519–cysteine 534, cysteine 536–cysteine 559, cysteine 541–cysteine 557, cysteine 549–cysteine 562, cysteine 564–cysteine 573, cysteine 575–cysteine 598, cysteine 582–cysteine 596, cysteine 590–cysteine 601, cysteine 603–cysteine 612, cysteine 615–cysteine 618, cysteine 622–cysteine 662, cysteine 628–cysteine 647, cysteine 631–cysteine 643, and cysteine 670–cysteine 695. Asparagine 50 and asparagine 116 each carry an N-linked (GlcNAc...) asparagine glycan. The VWFA domain occupies 124-363; the sequence is GYPIDLYYLM…ELIKNAYNKL (240 aa). Positions 136 and 138 each coordinate Mg(2+). 4 residues coordinate Ca(2+): serine 138, aspartate 141, aspartate 142, and aspartate 173. Residues asparagine 229, aspartate 231, proline 233, and glutamate 234 each coordinate Ca(2+). Glutamate 234 lines the Mg(2+) pocket. The N-linked (GlcNAc...) asparagine glycan is linked to asparagine 254. 2 residues coordinate Ca(2+): aspartate 264 and glutamate 347. Residues 397-399 carry the Cell attachment site motif; the sequence is RGD. 4 I-EGF domains span residues 449–482, 483–535, 536–574, and 575–613; these read CRDA…KNCE, CQTQ…QFCE, CDNV…SACQ, and CLKS…PLCS. Asparagine 501 carries an N-linked (GlcNAc...) asparagine glycan. The N-linked (GlcNAc...) asparagine glycan is linked to asparagine 642. Residues 701–723 form a helical membrane-spanning segment; it reads IAAIVGGTVGGVVLVGILLLVIW. Over 724–769 the chain is Cytoplasmic; the sequence is KALTHLSDLREYHRFEKEKLKSQWNNDNPLFKSATTTVMNPKFAES. A phosphoserine mark is found at serine 745 and serine 756. Phosphothreonine is present on residues threonine 758 and threonine 760.

The protein belongs to the integrin beta chain family. In terms of assembly, heterodimer of an alpha and a beta subunit. The ITGB2 beta subunit associates with the ITGAL, ITGAM, ITGAX or ITGAD alpha subunits. Found in a complex with CD177 and ITGAM/CD11b. Interacts with FGR. Interacts with COPS5 and RANBP9. Interacts with FLNA (via filamin repeats 4, 9, 12, 17, 19, 21, and 23). Interacts with THBD. Both Ser-745 and Ser-756 become phosphorylated when T-cells are exposed to phorbol esters. Phosphorylation on Thr-758 (but not on Ser-756) allows interaction with 14-3-3 proteins.

Its subcellular location is the cell membrane. It is found in the membrane raft. In terms of biological role, integrin ITGAL/ITGB2 is a receptor for ICAM1, ICAM2, ICAM3 and ICAM4. Integrin ITGAL/ITGB2 is also a receptor for the secreted form of ubiquitin-like protein ISG15; the interaction is mediated by ITGAL. Integrins ITGAM/ITGB2 and ITGAX/ITGB2 are receptors for the iC3b fragment of the third complement component and for fibrinogen. Integrin ITGAX/ITGB2 recognizes the sequence G-P-R in fibrinogen alpha-chain. Integrin ITGAM/ITGB2 recognizes P1 and P2 peptides of fibrinogen gamma chain. Integrin ITGAM/ITGB2 is also a receptor for factor X. Integrin ITGAD/ITGB2 is a receptor for ICAM3 and VCAM1. Contributes to natural killer cell cytotoxicity. Involved in leukocyte adhesion and transmigration of leukocytes including T-cells and neutrophils. Triggers neutrophil transmigration during lung injury through PTK2B/PYK2-mediated activation. Integrin ITGAL/ITGB2 in association with ICAM3, contributes to apoptotic neutrophil phagocytosis by macrophages. This Bos taurus (Bovine) protein is Integrin beta-2 (ITGB2).